Here is a 264-residue protein sequence, read N- to C-terminus: Probable septum site-determining protein MinC (264 aa).

Residues 103–147 (SHGRRPRGGNDAKDADRNDAQDAQGAPEHAQAAEAPASTSAIPPA) form a disordered region. The segment covering 110 to 122 (GGNDAKDADRNDA) has biased composition (basic and acidic residues). Over residues 124-147 (DAQGAPEHAQAAEAPASTSAIPPA) the composition is skewed to low complexity.

It belongs to the MinC family. Interacts with MinD and FtsZ.

Its function is as follows. Cell division inhibitor that blocks the formation of polar Z ring septums. Rapidly oscillates between the poles of the cell to destabilize FtsZ filaments that have formed before they mature into polar Z rings. Prevents FtsZ polymerization. This chain is Probable septum site-determining protein MinC, found in Ralstonia pickettii (strain 12J).